A 243-amino-acid polypeptide reads, in one-letter code: Undecaprenyl-phosphate mannosyltransferase (243 aa).

Belongs to the glycosyltransferase 2 family.

The catalysed reaction is di-trans,octa-cis-undecaprenyl phosphate + GDP-alpha-D-mannose = D-mannosyl di-trans,octa-cis-undecaprenyl phosphate + GDP. Its function is as follows. Catalyzes the transfer of mannose from GDP-mannose to D-mannosyl-1-phosphoundecaprenol. This chain is Undecaprenyl-phosphate mannosyltransferase, found in Micrococcus luteus (strain ATCC 4698 / DSM 20030 / JCM 1464 / CCM 169 / CCUG 5858 / IAM 1056 / NBRC 3333 / NCIMB 9278 / NCTC 2665 / VKM Ac-2230) (Micrococcus lysodeikticus).